Here is a 367-residue protein sequence, read N- to C-terminus: Choline-phosphate cytidylyltransferase A (367 aa).

Residue Met-1 is modified to N-acetylmethionine. The disordered stretch occupies residues 1-31 (MDAQSSAKVNSRKRRKEVPGPNGATEEDGIP). Lys-8 is subject to N6-acetyllysine. CTP contacts are provided by Ile-84, Phe-85, His-92, and Lys-122. Phosphocholine-binding residues include Lys-122 and Trp-151. CTP-binding residues include His-168, Asp-169, Tyr-173, Gln-195, Arg-196, Thr-197, and Ile-200. 2 amphipathic regions span residues 228–287 (KELN…EFIG) and 298–315 (ALKHMLKEGKGRMLQAIS). Position 233 is a phosphoserine (Ser-233). An autoinhibitory (AI) region spans residues 272-293 (IDLIQKWEEKSREFIGSFLEMF). The segment at 313–367 (AISPKQSPSSSPTHERSPSPSFRWPFSGKTSPSSSPASLSRCKAVTCDISEDEED) is disordered. The residue at position 315 (Ser-315) is a Phosphoserine; by PKC. Over residues 315 to 324 (SPKQSPSSSP) the composition is skewed to polar residues. Phosphoserine is present on residues Ser-319, Ser-321, Ser-322, and Ser-323. Copy 1 of the repeat occupies 319 to 324 (SPSSSP). The interval 319–348 (SPSSSPTHERSPSPSFRWPFSGKTSPSSSP) is 3 X repeats. Thr-325 carries the phosphothreonine modification. Phosphoserine occurs at positions 329 and 331. A 2; approximate repeat occupies 329-333 (SPSPS). Residues 330-352 (PSPSFRWPFSGKTSPSSSPASLS) are compositionally biased toward low complexity. Ser-333 is modified (phosphoserine; by PKC). The residue at position 342 (Thr-342) is a Phosphothreonine. Phosphoserine is present on residues Ser-343, Ser-345, Ser-346, Ser-347, Ser-350, and Ser-352. Copy 3 of the repeat occupies 343-348 (SPSSSP). The residue at position 358 (Thr-358) is a Phosphothreonine. Residue Ser-362 is modified to Phosphoserine; by CK2.

Belongs to the cytidylyltransferase family. As to quaternary structure, homodimer. Post-translationally, the serine residues of the C-terminus are phosphorylated. The inactive soluble form is stabilized by phosphorylation, the active membrane bound form is promoted by anionic lipids or diacylglycerol, and is stabilized by dephosphorylation. In terms of processing, the N-terminus is blocked. Monoubiquitinated by the SCF(FBXL2) complex, leading to proteasomal degradation.

It localises to the cytoplasm. It is found in the cytosol. Its subcellular location is the membrane. The protein resides in the endoplasmic reticulum membrane. The protein localises to the nucleus. The enzyme catalyses phosphocholine + CTP + H(+) = CDP-choline + diphosphate. Its pathway is phospholipid metabolism; phosphatidylcholine biosynthesis; phosphatidylcholine from phosphocholine: step 1/2. With respect to regulation, interconverts between an inactive cytosolic form and an active membrane-bound form. Activation involves disruption of an inhibitory interaction between helices at the base of the active site and the autoinhibitory (AI) region. Activated by N-methylethanolamine. Activated by oleic acid-containing phosphatidylcholine vesicles. Its function is as follows. Catalyzes the key rate-limiting step in the CDP-choline pathway for phosphatidylcholine biosynthesis. The protein is Choline-phosphate cytidylyltransferase A (Pcyt1a) of Rattus norvegicus (Rat).